Reading from the N-terminus, the 307-residue chain is 4-hydroxythreonine-4-phosphate dehydrogenase (307 aa).

Substrate-binding residues include H126 and T127. Positions 156, 195, and 251 each coordinate a divalent metal cation. The substrate site is built by K259, N268, and R277.

It belongs to the PdxA family. In terms of assembly, homodimer. Requires Zn(2+) as cofactor. Mg(2+) serves as cofactor. Co(2+) is required as a cofactor.

The protein resides in the cytoplasm. It carries out the reaction 4-(phosphooxy)-L-threonine + NAD(+) = 3-amino-2-oxopropyl phosphate + CO2 + NADH. It functions in the pathway cofactor biosynthesis; pyridoxine 5'-phosphate biosynthesis; pyridoxine 5'-phosphate from D-erythrose 4-phosphate: step 4/5. Functionally, catalyzes the NAD(P)-dependent oxidation of 4-(phosphooxy)-L-threonine (HTP) into 2-amino-3-oxo-4-(phosphooxy)butyric acid which spontaneously decarboxylates to form 3-amino-2-oxopropyl phosphate (AHAP). The sequence is that of 4-hydroxythreonine-4-phosphate dehydrogenase from Helicobacter pylori (strain HPAG1).